The primary structure comprises 357 residues: 3-dehydroquinate synthase (357 aa).

NAD(+) contacts are provided by residues 69–74, 103–107, 127–128, lysine 140, lysine 149, and 167–170; these read DGEQFK, GVVGD, TT, and CLQT. Residues glutamate 182, histidine 245, and histidine 262 each contribute to the Zn(2+) site.

The protein belongs to the sugar phosphate cyclases superfamily. Dehydroquinate synthase family. It depends on Co(2+) as a cofactor. Zn(2+) serves as cofactor. Requires NAD(+) as cofactor.

It localises to the cytoplasm. The enzyme catalyses 7-phospho-2-dehydro-3-deoxy-D-arabino-heptonate = 3-dehydroquinate + phosphate. The protein operates within metabolic intermediate biosynthesis; chorismate biosynthesis; chorismate from D-erythrose 4-phosphate and phosphoenolpyruvate: step 2/7. Functionally, catalyzes the conversion of 3-deoxy-D-arabino-heptulosonate 7-phosphate (DAHP) to dehydroquinate (DHQ). This chain is 3-dehydroquinate synthase, found in Idiomarina loihiensis (strain ATCC BAA-735 / DSM 15497 / L2-TR).